Here is a 249-residue protein sequence, read N- to C-terminus: Probable transcriptional regulatory protein AB57_1731 (249 aa).

The protein belongs to the TACO1 family.

It is found in the cytoplasm. In Acinetobacter baumannii (strain AB0057), this protein is Probable transcriptional regulatory protein AB57_1731.